The following is a 248-amino-acid chain: MSGHSKWHNIQGRKNAQDAKRGKIFQKISRDLYQAAKAGDPDPANNAQLRLVIDKAHAANMPKKNIDRAIAKASGIGGAKFEEVTYEGYGPGGVAVMVSALTDNKNRTASAVRSAFSHSGGSLGASGSVSYMFDRKGLIEILRDDLDKSEDDMLMDALDAGAEDMKATEEKFQIFTDPSSMTDVRDALQEQGYELDTAEVTMIPQNRTEVPADKAKQYRHLIDELTENDDVADIYETGILPDEDDDEE.

The tract at residues 1–22 is disordered; that stretch reads MSGHSKWHNIQGRKNAQDAKRG.

This sequence belongs to the TACO1 family.

The protein resides in the cytoplasm. This is Probable transcriptional regulatory protein LAR_0538 from Limosilactobacillus reuteri subsp. reuteri (strain JCM 1112) (Lactobacillus reuteri).